The sequence spans 364 residues: Putative protein C31H2.4 (364 aa).

VOC domains lie at alanine 6 to phenylalanine 134 and leucine 161 to lysine 320. Histidine 164, histidine 248, and glutamate 331 together coordinate Fe cation.

It belongs to the 4HPPD family. The cofactor is Fe cation.

In Caenorhabditis elegans, this protein is Putative protein C31H2.4.